The primary structure comprises 227 residues: Esterase OVCA2 (227 aa).

Active-site charge relay system residues include Ser-120, Asp-180, and His-207.

Belongs to the LovG family.

It carries out the reaction a carboxylic ester + H2O = an alcohol + a carboxylate + H(+). Exhibits ester hydrolase activity with a strong preference for long-chain alkyl ester substrates and high selectivity against a variety of short, branched, and substituted esters. Is able to hydrolyze ester bonds within a wide range of p-nitrophenyl derivatives (C2-C14) in vitro, with a strong preference toward substrates of &gt;8 carbons. This Danio rerio (Zebrafish) protein is Esterase OVCA2 (ovca2).